Consider the following 232-residue polypeptide: 5'-methylthioadenosine/S-adenosylhomocysteine nucleosidase (232 aa).

The active-site Proton acceptor is Glu12. Residues Gly78, Ile152, and 173–174 (ME) contribute to the substrate site. The Proton donor role is filled by Asp197.

It belongs to the PNP/UDP phosphorylase family. MtnN subfamily. In terms of assembly, homodimer.

It carries out the reaction S-adenosyl-L-homocysteine + H2O = S-(5-deoxy-D-ribos-5-yl)-L-homocysteine + adenine. The enzyme catalyses S-methyl-5'-thioadenosine + H2O = 5-(methylsulfanyl)-D-ribose + adenine. The catalysed reaction is 5'-deoxyadenosine + H2O = 5-deoxy-D-ribose + adenine. It functions in the pathway amino-acid biosynthesis; L-methionine biosynthesis via salvage pathway; S-methyl-5-thio-alpha-D-ribose 1-phosphate from S-methyl-5'-thioadenosine (hydrolase route): step 1/2. Functionally, catalyzes the irreversible cleavage of the glycosidic bond in both 5'-methylthioadenosine (MTA) and S-adenosylhomocysteine (SAH/AdoHcy) to adenine and the corresponding thioribose, 5'-methylthioribose and S-ribosylhomocysteine, respectively. Also cleaves 5'-deoxyadenosine, a toxic by-product of radical S-adenosylmethionine (SAM) enzymes, into 5-deoxyribose and adenine. Thus, is required for in vivo function of the radical SAM enzymes biotin synthase and lipoic acid synthase, that are inhibited by 5'-deoxyadenosine accumulation. In Salmonella agona (strain SL483), this protein is 5'-methylthioadenosine/S-adenosylhomocysteine nucleosidase.